A 263-amino-acid chain; its full sequence is Glutamate racemase (263 aa).

Substrate contacts are provided by residues 12-13 and 44-45; these read DS and YG. The active-site Proton donor/acceptor is cysteine 75. 76 to 77 lines the substrate pocket; sequence NT. The active-site Proton donor/acceptor is the cysteine 186. 187–188 contributes to the substrate binding site; sequence TH.

The protein belongs to the aspartate/glutamate racemases family.

The enzyme catalyses L-glutamate = D-glutamate. The protein operates within cell wall biogenesis; peptidoglycan biosynthesis. Its function is as follows. Provides the (R)-glutamate required for cell wall biosynthesis. The chain is Glutamate racemase from Ectopseudomonas mendocina (strain ymp) (Pseudomonas mendocina).